The sequence spans 345 residues: S-adenosylmethionine:tRNA ribosyltransferase-isomerase (345 aa).

Belongs to the QueA family. In terms of assembly, monomer.

It is found in the cytoplasm. The catalysed reaction is 7-aminomethyl-7-carbaguanosine(34) in tRNA + S-adenosyl-L-methionine = epoxyqueuosine(34) in tRNA + adenine + L-methionine + 2 H(+). Its pathway is tRNA modification; tRNA-queuosine biosynthesis. Transfers and isomerizes the ribose moiety from AdoMet to the 7-aminomethyl group of 7-deazaguanine (preQ1-tRNA) to give epoxyqueuosine (oQ-tRNA). The sequence is that of S-adenosylmethionine:tRNA ribosyltransferase-isomerase from Shewanella loihica (strain ATCC BAA-1088 / PV-4).